Reading from the N-terminus, the 626-residue chain is Chaperone protein HtpG (626 aa).

Positions 1–339 (MSTNQETRGF…SNDLPLNVSR (339 aa)) are a; substrate-binding. The b stretch occupies residues 340–555 (EILQDNKVTA…NDQMTTQMAK (216 aa)). The c stretch occupies residues 556-626 (LFAAAGQPVP…FIKRINKLLG (71 aa)).

This sequence belongs to the heat shock protein 90 family. Homodimer.

The protein localises to the cytoplasm. In terms of biological role, molecular chaperone. Has ATPase activity. This Aggregatibacter actinomycetemcomitans (Actinobacillus actinomycetemcomitans) protein is Chaperone protein HtpG.